The sequence spans 377 residues: Endoplasmic reticulum-Golgi intermediate compartment protein 2 (377 aa).

Residues 1-33 (MRRLNRRKTLSLVKELDAFPKVPDSYVETSASG) are Cytoplasmic-facing. A helical transmembrane segment spans residues 34 to 54 (GTVSLIAFTTMALLTIMEFSV). The Lumenal segment spans residues 55–319 (YQDTWMKYEY…PFWQFFVRLC (265 aa)). Residues 320 to 340 (GIIGGIFSTTGMLHGIGKFIV) traverse the membrane as a helical segment. At 341–377 (EIICCRFRLGSYKPVRSVPFADGHTDNHLPLLENNTH) the chain is on the cytoplasmic side.

Belongs to the ERGIC family. May form a heteromeric complex composed of ERGIC1, ERGIC2 and ERGIC3. Interacts with ERGIC3, the interaction is required for the stable expression of both proteins. May interact with EEF1A1.

The protein localises to the endoplasmic reticulum-Golgi intermediate compartment membrane. It is found in the golgi apparatus. It localises to the cis-Golgi network membrane. The protein resides in the endoplasmic reticulum membrane. Its subcellular location is the cytoplasm. The protein localises to the nucleus. Functionally, possible role in transport between endoplasmic reticulum and Golgi. This Mus musculus (Mouse) protein is Endoplasmic reticulum-Golgi intermediate compartment protein 2 (Ergic2).